Reading from the N-terminus, the 400-residue chain is Tryptophan synthase beta chain (400 aa).

An N6-(pyridoxal phosphate)lysine modification is found at Lys91.

It belongs to the TrpB family. In terms of assembly, tetramer of two alpha and two beta chains. The cofactor is pyridoxal 5'-phosphate.

The catalysed reaction is (1S,2R)-1-C-(indol-3-yl)glycerol 3-phosphate + L-serine = D-glyceraldehyde 3-phosphate + L-tryptophan + H2O. Its pathway is amino-acid biosynthesis; L-tryptophan biosynthesis; L-tryptophan from chorismate: step 5/5. The beta subunit is responsible for the synthesis of L-tryptophan from indole and L-serine. The sequence is that of Tryptophan synthase beta chain from Listeria monocytogenes serovar 1/2a (strain ATCC BAA-679 / EGD-e).